A 133-amino-acid chain; its full sequence is Ribonuclease P protein component (133 aa).

The protein belongs to the RnpA family. In terms of assembly, consists of a catalytic RNA component (M1 or rnpB) and a protein subunit.

It carries out the reaction Endonucleolytic cleavage of RNA, removing 5'-extranucleotides from tRNA precursor.. Its function is as follows. RNaseP catalyzes the removal of the 5'-leader sequence from pre-tRNA to produce the mature 5'-terminus. It can also cleave other RNA substrates such as 4.5S RNA. The protein component plays an auxiliary but essential role in vivo by binding to the 5'-leader sequence and broadening the substrate specificity of the ribozyme. The polypeptide is Ribonuclease P protein component (Corynebacterium glutamicum (strain ATCC 13032 / DSM 20300 / JCM 1318 / BCRC 11384 / CCUG 27702 / LMG 3730 / NBRC 12168 / NCIMB 10025 / NRRL B-2784 / 534)).